The primary structure comprises 87 residues: Beta-toxin Ct1a (87 aa).

A signal peptide spans 1–19 (MNSLLMITACLALIGTVWA). Residues 20–85 (KEGYLVNHST…VWPLPKKTCN (66 aa)) form the LCN-type CS-alpha/beta domain. 4 cysteine pairs are disulfide-bonded: cysteine 31–cysteine 84, cysteine 35–cysteine 60, cysteine 44–cysteine 65, and cysteine 48–cysteine 67. Asparagine 85 carries the asparagine amide modification.

It belongs to the long (4 C-C) scorpion toxin superfamily. Sodium channel inhibitor family. Beta subfamily. Expressed by the venom gland.

The protein resides in the secreted. Its function is as follows. Beta toxins bind voltage-independently at site-4 of sodium channels (Nav) and shift the voltage of activation toward more negative potentials thereby affecting sodium channel activation and promoting spontaneous and repetitive firing. Is lethal to mice but does not show toxicity to freshwater shrimp and crickets. The sequence is that of Beta-toxin Ct1a from Centruroides tecomanus (Scorpion).